A 245-amino-acid chain; its full sequence is uncharacterized protein (245 aa).

This is an uncharacterized protein from Bacillus subtilis (strain 168).